The chain runs to 112 residues: UPF0235 protein Atu2660 (112 aa).

This sequence belongs to the UPF0235 family.

The chain is UPF0235 protein Atu2660 from Agrobacterium fabrum (strain C58 / ATCC 33970) (Agrobacterium tumefaciens (strain C58)).